The chain runs to 181 residues: Cyclic phosphodiesterase (181 aa).

Catalysis depends on His42, which acts as the Proton donor/acceptor. Thr44 contributes to the substrate binding site. 2 cysteine pairs are disulfide-bonded: Cys64–Cys177 and Cys104–Cys110. His119 functions as the Proton donor/acceptor in the catalytic mechanism. Residues Ser121 and Tyr124 each contribute to the substrate site.

It belongs to the 2H phosphoesterase superfamily. CPD1 family. Expressed in leaves, stems, roots, floral buds and germinating seeds.

The protein localises to the cytoplasm. The enzyme catalyses ADP-alpha-D-ribose 1'',2''-cyclic phosphate + H2O = ADP-alpha-D-ribose 1''-phosphate + H(+). It carries out the reaction 2',3'-cyclophospho-AMP + H2O = adenosine 2'-phosphate + H(+). It catalyses the reaction 2',3'-cyclophospho-GMP + H2O = guanosine 2'-phosphate + H(+). The catalysed reaction is 2',3'-cyclophospho-UMP + H2O = uridine 2'-phosphate + H(+). The enzyme catalyses 2',3'-cyclophospho-CMP + H2O = cytidine 2'-phosphate + H(+). Inhibited by Cu(2+) and Zn(2+) at 0.5 mM by 93 and 87% respectively. Not inhibited by Ca(2+), Mg(2+), Co(2+), Ni(2+), and EDTA at 0.5 mM. Hydrolyzes ADP-ribose 1'',2''-cyclic phosphate (Appr&gt;1) that is produced during tRNA splicing into ADP-ribose 1''-phosphate (Appr-1''p). Also acts on nucleoside 2',3'-cyclic phosphates. The sequence is that of Cyclic phosphodiesterase from Arabidopsis thaliana (Mouse-ear cress).